A 41-amino-acid chain; its full sequence is Photosystem I reaction center subunit IX (41 aa).

A helical transmembrane segment spans residues 7–27 (YLSTAPVVATGWFIVTAALLI).

Belongs to the PsaJ family.

It is found in the plastid. The protein localises to the chloroplast thylakoid membrane. Its function is as follows. May help in the organization of the PsaE and PsaF subunits. The polypeptide is Photosystem I reaction center subunit IX (Tetradesmus obliquus (Green alga)).